Reading from the N-terminus, the 166-residue chain is Phospholipase A2 inhibitor (166 aa).

A signal peptide spans 1–19 (MRLILLSGLLLLGIFLANG). The C-type lectin domain occupies 46-161 (LRGAFLTVYK…CDDNLLVVCE (116 aa)). Residues asparagine 61 and asparagine 122 are each glycosylated (N-linked (GlcNAc...) asparagine). Disulfide bonds link cysteine 83/cysteine 160 and cysteine 138/cysteine 152.

It belongs to the alpha-type phospholipase A2 inhibitor family. In terms of assembly, homotrimer; non-covalently linked. In terms of tissue distribution, expressed by the liver.

It is found in the secreted. Functionally, this phospholipase A2 inhibitor binds directly phospholipase A2 in the presence or absence of calcium. The protein is Phospholipase A2 inhibitor of Bothrops alternatus (Urutu).